The sequence spans 435 residues: Gap junction alpha-3 protein (435 aa).

An intramembrane segment occupies 2-15 (GDWSFLGRLLENAQ). The Cytoplasmic segment spans residues 16-19 (EHST). A helical transmembrane segment spans residues 20 to 40 (VIGKVWLTVLFIFRILVLGAA). Residues 41–71 (AEDVWGDEQSDFTCNTQQPGCENVCYDRAFP) lie on the Extracellular side of the membrane. Disulfide bonds link Cys-54–Cys-192, Cys-61–Cys-186, and Cys-65–Cys-181. Residues 72–92 (ISHIRFWALQIIFVSTPTLIY) traverse the membrane as a helical segment. Over 93 to 152 (LGHVLHIVRMEEKKKEREEEEQLKRESPSPKEPPQDNPSSRDDRGRVRMAGALLRTYVFN) the chain is Cytoplasmic. The segment covering 108-121 (EREEEEQLKRESPS) has biased composition (basic and acidic residues). A disordered region spans residues 108–136 (EREEEEQLKRESPSPKEPPQDNPSSRDDR). Residues 153-173 (IIFKTLFEVGFIAGQYFLYGF) traverse the membrane as a helical segment. Residues 174 to 201 (ELKPLYRCDRWPCPNTVDCFISRPTEKT) lie on the Extracellular side of the membrane. The helical transmembrane segment at 202–222 (IFIIFMLAVACASLLLNMLEI) threads the bilayer. The Cytoplasmic portion of the chain corresponds to 223–435 (YHLGWKKLKQ…GRARPEDLAI (213 aa)). The disordered stretch occupies residues 332–435 (AAERQPPALK…GRARPEDLAI (104 aa)). 2 stretches are compositionally biased toward low complexity: residues 342 to 389 (AYPA…ALAG) and 415 to 427 (GRAS…SSGR).

The protein belongs to the connexin family. Alpha-type (group II) subfamily. In terms of assembly, a hemichannel or connexon is composed of a hexamer of connexins. A functional gap junction is formed by the apposition of two hemichannels. Forms heteromeric channels with GJA8.

It localises to the cell membrane. The protein resides in the cell junction. It is found in the gap junction. Structural component of lens fiber gap junctions. Gap junctions are dodecameric channels that connect the cytoplasm of adjoining cells. They are formed by the docking of two hexameric hemichannels, one from each cell membrane. Small molecules and ions diffuse from one cell to a neighboring cell via the central pore. The protein is Gap junction alpha-3 protein (GJA3) of Homo sapiens (Human).